Consider the following 350-residue polypeptide: Bifunctional methylenetetrahydrofolate dehydrogenase/cyclohydrolase, mitochondrial (350 aa).

A mitochondrion-targeting transit peptide spans 1-35; sequence MASVSLLSALAVRLLRPTHGCHPRLQPFHLAAVRN. N6-acetyllysine; alternate is present on lysine 50. Lysine 50 participates in a covalent cross-link: Glycyl lysine isopeptide (Lys-Gly) (interchain with G-Cter in SUMO2); alternate. Substrate contacts are provided by residues 84 to 88 and 131 to 133; these read YVLNK and VQL. NAD(+)-binding positions include 200 to 202 and arginine 233; that span reads GRS. Residue 309 to 313 participates in substrate binding; the sequence is PGGVG.

It belongs to the tetrahydrofolate dehydrogenase/cyclohydrolase family. In terms of assembly, homodimer. It depends on Mg(2+) as a cofactor.

The protein localises to the mitochondrion. It carries out the reaction (6R)-5,10-methylene-5,6,7,8-tetrahydrofolate + NAD(+) = (6R)-5,10-methenyltetrahydrofolate + NADH. The catalysed reaction is (6R)-5,10-methenyltetrahydrofolate + H2O = (6R)-10-formyltetrahydrofolate + H(+). Its function is as follows. Although its dehydrogenase activity is NAD-specific, it can also utilize NADP at a reduced efficiency. The chain is Bifunctional methylenetetrahydrofolate dehydrogenase/cyclohydrolase, mitochondrial (Mthfd2) from Mus musculus (Mouse).